A 169-amino-acid polypeptide reads, in one-letter code: UPF0398 protein Spy49_1277c (169 aa).

Belongs to the UPF0398 family.

This Streptococcus pyogenes serotype M49 (strain NZ131) protein is UPF0398 protein Spy49_1277c.